A 138-amino-acid chain; its full sequence is MFDIGFSELLLIAVVALVVLGPERLPKAARFAGLLVRRARTQWESIKQELERELEAEALKRNLQNAQQVIHDAQAQLQSNQQDMDIQNSISILHEQTKRDIHPDHDTNTLEPSTAVHHVHVPPPSTSTHGNNGQEKSQ.

The helical transmembrane segment at Met-1 to Gly-21 threads the bilayer. A disordered region spans residues Val-116–Gln-138. The span at Thr-126–Gln-138 shows a compositional bias: polar residues.

The protein belongs to the TatB family. As to quaternary structure, the Tat system comprises two distinct complexes: a TatABC complex, containing multiple copies of TatA, TatB and TatC subunits, and a separate TatA complex, containing only TatA subunits. Substrates initially bind to the TatABC complex, which probably triggers association of the separate TatA complex to form the active translocon.

Its subcellular location is the cell inner membrane. Its function is as follows. Part of the twin-arginine translocation (Tat) system that transports large folded proteins containing a characteristic twin-arginine motif in their signal peptide across membranes. Together with TatC, TatB is part of a receptor directly interacting with Tat signal peptides. TatB may form an oligomeric binding site that transiently accommodates folded Tat precursor proteins before their translocation. This chain is Sec-independent protein translocase protein TatB, found in Xylella fastidiosa (strain Temecula1 / ATCC 700964).